We begin with the raw amino-acid sequence, 329 residues long: Mitochondrial substrate carrier family protein W (329 aa).

The Mitochondrial intermembrane portion of the chain corresponds to 1 to 39 (MTTNNSNDNNKRYGIIKQQLQQQQQQHHQQHEQHSRLVE). Solcar repeat units follow at residues 34–119 (HSRL…CKEL), 133–221 (ESPL…FKSI), and 231–321 (LGIV…IKKF). The helical transmembrane segment at 40-60 (MTAGCGAGFMASLFTTPLDVI) threads the bilayer. Residues 61 to 90 (KTTLQVDNSSNKTIMSTVKSILDRKGGVKN) are Mitochondrial matrix-facing. A helical transmembrane segment spans residues 91-111 (LYLGLKPTLVGQIPSWAVYFS). Topologically, residues 112-135 (TYTFCKELFTKENDKHSLLEKESP) are mitochondrial intermembrane. Residues 136–156 (LIFMTSAIIAGAATSICTSPI) traverse the membrane as a helical segment. At 157–193 (WLIKTRFITQEMVGRQKKYRGIVHSMVSIYHEEGFRG) the chain is on the mitochondrial matrix side. The chain crosses the membrane as a helical span at residues 194–214 (LYKGLGPSLLGVLHVGVQFPL). Residues 215 to 230 (YEKFKSILKEKNKNKE) are Mitochondrial intermembrane-facing. The helical transmembrane segment at 231–251 (LGIVEIMIASSVSKIIASVVA) threads the bilayer. The Mitochondrial matrix portion of the chain corresponds to 252 to 296 (YPHEVLRARSQDSSPDSPNRTYRGNIIQMFKQIVREEGWRGLYRG). Residues 297–315 (MGVNLLRVTPSCVITFTSY) traverse the membrane as a helical segment. The Mitochondrial intermembrane segment spans residues 316-329 (EYIKKFLSQNQNHF).

This sequence belongs to the mitochondrial carrier (TC 2.A.29) family.

The protein resides in the mitochondrion inner membrane. In terms of biological role, mitochondrial solute carriers shuttle metabolites, nucleotides, and cofactors through the mitochondrial inner membrane. The chain is Mitochondrial substrate carrier family protein W (mcfW) from Dictyostelium discoideum (Social amoeba).